A 370-amino-acid polypeptide reads, in one-letter code: Histidinol-phosphate aminotransferase 1 (370 aa).

N6-(pyridoxal phosphate)lysine is present on K222.

Belongs to the class-II pyridoxal-phosphate-dependent aminotransferase family. Histidinol-phosphate aminotransferase subfamily. As to quaternary structure, homodimer. Pyridoxal 5'-phosphate serves as cofactor.

The enzyme catalyses L-histidinol phosphate + 2-oxoglutarate = 3-(imidazol-4-yl)-2-oxopropyl phosphate + L-glutamate. It functions in the pathway amino-acid biosynthesis; L-histidine biosynthesis; L-histidine from 5-phospho-alpha-D-ribose 1-diphosphate: step 7/9. The sequence is that of Histidinol-phosphate aminotransferase 1 from Bacillus thuringiensis subsp. konkukian (strain 97-27).